A 59-amino-acid chain; its full sequence is Small, acid-soluble spore protein H 2 (59 aa).

Belongs to the SspH family.

Its subcellular location is the spore core. The chain is Small, acid-soluble spore protein H 2 from Geobacillus kaustophilus (strain HTA426).